We begin with the raw amino-acid sequence, 240 residues long: UDP-2,3-diacylglucosamine hydrolase (240 aa).

Mn(2+) is bound by residues aspartate 8, histidine 10, aspartate 41, asparagine 79, and histidine 114. 79–80 (NR) contacts substrate. Substrate contacts are provided by aspartate 122, serine 160, asparagine 164, lysine 167, and histidine 195. Mn(2+) contacts are provided by histidine 195 and histidine 197.

This sequence belongs to the LpxH family. Mn(2+) serves as cofactor.

Its subcellular location is the cell inner membrane. The enzyme catalyses UDP-2-N,3-O-bis[(3R)-3-hydroxytetradecanoyl]-alpha-D-glucosamine + H2O = 2-N,3-O-bis[(3R)-3-hydroxytetradecanoyl]-alpha-D-glucosaminyl 1-phosphate + UMP + 2 H(+). Its pathway is glycolipid biosynthesis; lipid IV(A) biosynthesis; lipid IV(A) from (3R)-3-hydroxytetradecanoyl-[acyl-carrier-protein] and UDP-N-acetyl-alpha-D-glucosamine: step 4/6. Hydrolyzes the pyrophosphate bond of UDP-2,3-diacylglucosamine to yield 2,3-diacylglucosamine 1-phosphate (lipid X) and UMP by catalyzing the attack of water at the alpha-P atom. Involved in the biosynthesis of lipid A, a phosphorylated glycolipid that anchors the lipopolysaccharide to the outer membrane of the cell. This Pectobacterium carotovorum subsp. carotovorum (strain PC1) protein is UDP-2,3-diacylglucosamine hydrolase.